Reading from the N-terminus, the 882-residue chain is Valine--tRNA ligase (882 aa).

Residues 52 to 62 carry the 'HIGH' region motif; it reads PNVTGSLHMGH. Residues 539–543 carry the 'KMSKS' region motif; sequence KMSKS. Lysine 542 serves as a coordination point for ATP. The stretch at 816–882 forms a coiled coil; sequence IDVAAERRRL…RINARLAVLQ (67 aa).

Belongs to the class-I aminoacyl-tRNA synthetase family. ValS type 1 subfamily. As to quaternary structure, monomer.

It localises to the cytoplasm. The catalysed reaction is tRNA(Val) + L-valine + ATP = L-valyl-tRNA(Val) + AMP + diphosphate. Its function is as follows. Catalyzes the attachment of valine to tRNA(Val). As ValRS can inadvertently accommodate and process structurally similar amino acids such as threonine, to avoid such errors, it has a 'posttransfer' editing activity that hydrolyzes mischarged Thr-tRNA(Val) in a tRNA-dependent manner. The protein is Valine--tRNA ligase of Mycolicibacterium paratuberculosis (strain ATCC BAA-968 / K-10) (Mycobacterium paratuberculosis).